A 102-amino-acid chain; its full sequence is MYAVIRTGGKQYRVAEGDVVRIEKIAGDVGAEVTFTEILLVGGSESPKVGQPTVAGAKVVGKVLAQDKHRRVLHFRKEKEGWTRRRGHRQPYTEVKVTSIAG.

It belongs to the bacterial ribosomal protein bL21 family. As to quaternary structure, part of the 50S ribosomal subunit. Contacts protein L20.

This protein binds to 23S rRNA in the presence of protein L20. The sequence is that of Large ribosomal subunit protein bL21 from Myxococcus xanthus (strain DK1622).